Here is a 209-residue protein sequence, read N- to C-terminus: MELSVYNIKGEDTGKKVVLDDSIFAIEPNDHAIYLDVKQYMANQRQGTHKAKERSELSGSTRKLIRQKGSGGARRGDINSPLLSGGARVFGPRPRNYSFKLNKKLKALARRSALSYKAKNNEIIVVEDFNFDAPKTKAFKAISAALKVGEKKVLYVLPEVNKNVYLSARNLPNTNLILANLINTYTVLASKNLVLTERSVAVVNELFKA.

The tract at residues 45–80 (RQGTHKAKERSELSGSTRKLIRQKGSGGARRGDINS) is disordered.

It belongs to the universal ribosomal protein uL4 family. In terms of assembly, part of the 50S ribosomal subunit.

Its function is as follows. One of the primary rRNA binding proteins, this protein initially binds near the 5'-end of the 23S rRNA. It is important during the early stages of 50S assembly. It makes multiple contacts with different domains of the 23S rRNA in the assembled 50S subunit and ribosome. Functionally, forms part of the polypeptide exit tunnel. The polypeptide is Large ribosomal subunit protein uL4 (Porphyromonas gingivalis (strain ATCC BAA-308 / W83)).